The chain runs to 800 residues: Kolavenyl diphosphate synthase TPS5, chloroplastic (800 aa).

Residues 1–75 (MSLAYSQATS…VILTAEKSVD (75 aa)) constitute a chloroplast transit peptide. K244 lines the substrate pocket. Mg(2+) is bound by residues D375 and D377. The DXDD motif motif lies at 375 to 378 (DVDD). Position 461 (K461) interacts with substrate.

This sequence belongs to the terpene synthase family. It depends on Mg(2+) as a cofactor. In terms of tissue distribution, mostly expressed in trichomes of leaves and fruits.

Its subcellular location is the plastid. The protein localises to the chloroplast. It catalyses the reaction (2E,6E,10E)-geranylgeranyl diphosphate = (+)-kolavenyl diphosphate. Its pathway is secondary metabolite biosynthesis; terpenoid biosynthesis. Its function is as follows. Involved in the biosynthesis of labdane-type diterpenoid including cleroda-dienols, and peregrinol lactones and furan derivatives, dopaminergic diterpenoids that can bind to dopamine receptors in the human pituitary gland, have probably ability to lower prolactin levels, and are used to treat menstrual cycle disorders (e.g. premenstrual syndrome and mastodynia). Terpene synthase that produces kolavenyl diphosphate from geranylgeranyl diphosphate (GGPP). This is Kolavenyl diphosphate synthase TPS5, chloroplastic from Vitex agnus-castus (Chaste tree).